The primary structure comprises 408 residues: NADH-quinone oxidoreductase subunit D (408 aa).

Belongs to the complex I 49 kDa subunit family. NDH-1 is composed of 14 different subunits. Subunits NuoB, C, D, E, F, and G constitute the peripheral sector of the complex.

The protein resides in the cell inner membrane. It carries out the reaction a quinone + NADH + 5 H(+)(in) = a quinol + NAD(+) + 4 H(+)(out). Its function is as follows. NDH-1 shuttles electrons from NADH, via FMN and iron-sulfur (Fe-S) centers, to quinones in the respiratory chain. The immediate electron acceptor for the enzyme in this species is believed to be ubiquinone. Couples the redox reaction to proton translocation (for every two electrons transferred, four hydrogen ions are translocated across the cytoplasmic membrane), and thus conserves the redox energy in a proton gradient. In Campylobacter jejuni subsp. jejuni serotype O:23/36 (strain 81-176), this protein is NADH-quinone oxidoreductase subunit D.